A 1107-amino-acid polypeptide reads, in one-letter code: Polyphosphatidylinositol phosphatase INP53 (1107 aa).

Residues 142–482 (LKKLLSNGSF…GDQISQIYTG (341 aa)) enclose the SAC domain. Serine 497 is subject to Phosphoserine. The segment at 926–1107 (TASSVASSSP…LDSWQPLTPK (182 aa)) is disordered. The span at 927 to 942 (ASSVASSSPVSSASAS) shows a compositional bias: low complexity. Polar residues predominate over residues 943-956 (LQPVRTQNSSQSRT). Position 986 is a phosphoserine (serine 986). 4 stretches are compositionally biased toward polar residues: residues 987–1005 (PTPQ…NIQE), 1020–1038 (FSQN…SPMS), 1045–1063 (NSAS…QTPT), and 1097–1107 (TLDSWQPLTPK). Serine 1035 is modified (phosphoserine). Threonine 1105 carries the phosphothreonine modification.

Belongs to the synaptojanin family. The protein in the central section; belongs to the inositol 1,4,5-trisphosphate 5-phosphatase family. In terms of assembly, interacts (via SAC domain) with BSP1; the interaction is direct. Interacts with CHC1.

It localises to the cytoplasm. The catalysed reaction is a 1,2-diacyl-sn-glycero-3-phospho-(1D-myo-inositol-4,5-bisphosphate) + H2O = a 1,2-diacyl-sn-glycero-3-phospho-(1D-myo-inositol 4-phosphate) + phosphate. Its function is as follows. Dephosphorylates a number of phosphatidylinositols (PIs) like phosphatidylinositol 4,5-bisphosphate (PtdIns(4,5)P2), but also phosphatidylinositol 3-phosphate (PtdIns(3)P), phosphatidylinositol 4-phosphate (PtdIns(4)P), and phosphatidylinositol 3,5-bisphosphate (PtdIns(3,5)P2). Controls the cellular levels and subcellular distribution of phosphatidylinositol 3-phosphate and phosphatidylinositol 4,5-bisphosphate. Plays an essential role in a TGN (trans Golgi network)-to-early endosome pathway. Involved in clathrin-mediated protein sorting at the TGN. In Saccharomyces cerevisiae (strain ATCC 204508 / S288c) (Baker's yeast), this protein is Polyphosphatidylinositol phosphatase INP53 (INP53).